The chain runs to 318 residues: MHIKATVERLPGGMMLVPLLLGAVCHTLWPQAGSTLGSFSNGLISGTVPILAVWFFCMGATIQLRASGRVLRRSGSLVLTKIAMAWLVAVLCAPLLPIGGVPSGPLAGLSVLALVAAMDMTNGGLYAALMQQYGSSEDAGAVVLMSLESGPLISMLILGASGLASFDPLLFVGAVLPLLLGFALGNLDAQLRQFFAQATTTLVPFFGFALGNTLDLSTIAHTGASGVLLGVAVIVITGLPLLLADRWIGGGNGTAGVAASSTAGAAVATPALIAGMAPQFAPAAPAATALVASAVIVTSLLVPLLTALYARRGVARSG.

10 helical membrane-spanning segments follow: residues 10–30, 42–62, 82–102, 109–129, 139–159, 163–183, 194–214, 224–244, 257–277, and 289–309; these read LPGG…TLWP, GLIS…GATI, IAMA…GGVP, LSVL…YAAL, AGAV…LILG, LASF…LGFA, FFAQ…GNTL, ASGV…LLLA, VAAS…AGMA, and ALVA…TALY.

The protein belongs to the KdgT transporter family.

Its subcellular location is the cell inner membrane. The enzyme catalyses 2-dehydro-3-deoxy-D-gluconate(in) + H(+)(in) = 2-dehydro-3-deoxy-D-gluconate(out) + H(+)(out). Its function is as follows. Catalyzes the proton-dependent uptake of 2-keto-3-deoxygluconate (KDG) into the cell. In Xanthomonas euvesicatoria pv. vesicatoria (strain 85-10) (Xanthomonas campestris pv. vesicatoria), this protein is 2-keto-3-deoxygluconate permease.